We begin with the raw amino-acid sequence, 226 residues long: Transmembrane protein 204 (226 aa).

At 1–5 (MTVQR) the chain is on the cytoplasmic side. A helical membrane pass occupies residues 6 to 26 (LVAAAVLVALVSLILNNVAAF). At 27–103 (TSNWVCQTLE…LQFDMMRACN (77 aa)) the chain is on the extracellular side. A helical membrane pass occupies residues 104 to 124 (LVATAALTAGQLTFLLGLVGL). Topologically, residues 125 to 136 (PLLSPDAPCWEE) are cytoplasmic. A helical membrane pass occupies residues 137–157 (AMAAAFQLASFVLVIGLVTFY). Residues 158–170 (RIGPYTNLSWSCY) are Extracellular-facing. N-linked (GlcNAc...) asparagine glycosylation occurs at Asn-164. The chain crosses the membrane as a helical span at residues 171–191 (LNIGACLLATLAAAMLIWNIL). The Cytoplasmic portion of the chain corresponds to 192–226 (HKREDCMAPRVIVISRSLTARFRRGLDNDYVESPC).

As to expression, highly expressed in lung, heart, kidney and placenta. Lower expression in thymus, spleen, liver, testis and ovary. Expressed in endothelial and restricted epithelial cell populations.

Its subcellular location is the cell junction. It is found in the adherens junction. It localises to the cell membrane. Its function is as follows. Can influence paracellular permeability. Appears to be involved in cell-cell interactions through adherens. The protein is Transmembrane protein 204 (TMEM204) of Homo sapiens (Human).